The sequence spans 225 residues: MVSHSELRKLFCSADAVCFDVDSTVIREEGIDELAKFCGVEAAVSEMTRRAMGGALPFKDALTERLALIQPSRDQVQRLLAEHPPHLTPGIRELVSRLQERNVQVFLISGGFRSIVEHVAAKLNIPTTNVFANRLKFYFNGEYAGFDETQPTAESGGKGKVIGFLKEKFHFKKIIMIGDGATDMEACPPADAFIGFGGNVIRQQVKDNAKWYITDFVELLGELEE.

N-acetylmethionine is present on Met1. Asp20 functions as the Nucleophile in the catalytic mechanism. Residues Asp20 and Asp22 each coordinate Mg(2+). 20–22 (DVD) serves as a coordination point for L-serine. Asp22 functions as the Proton donor in the catalytic mechanism. Met52 lines the O-phospho-L-serine pocket. Gly53 contacts phosphate. L-serine contacts are provided by residues 109-111 (SGG) and Lys158. O-phospho-L-serine is bound by residues 109 to 111 (SGG) and Lys158. Residue Asp179 coordinates Mg(2+). Residue Thr182 participates in O-phospho-L-serine binding. Thr182 lines the phosphate pocket.

It belongs to the HAD-like hydrolase superfamily. SerB family. Homodimer. Requires Mg(2+) as cofactor.

It is found in the cytoplasm. The protein localises to the cytosol. The catalysed reaction is O-phospho-L-serine + H2O = L-serine + phosphate. The enzyme catalyses O-phospho-D-serine + H2O = D-serine + phosphate. The protein operates within amino-acid biosynthesis; L-serine biosynthesis; L-serine from 3-phospho-D-glycerate: step 3/3. Functionally, catalyzes the last irreversible step in the biosynthesis of L-serine from carbohydrates, the dephosphorylation of O-phospho-L-serine to L-serine. L-serine can then be used in protein synthesis, to produce other amino acids, in nucleotide metabolism or in glutathione synthesis, or can be racemized to D-serine, a neuromodulator. May also act on O-phospho-D-serine. The chain is Phosphoserine phosphatase from Rattus norvegicus (Rat).